The chain runs to 689 residues: Elongation factor G (689 aa).

The 275-residue stretch at A9–L283 folds into the tr-type G domain. GTP is bound by residues A18–T25, D82–H86, and N136–D139.

Belongs to the TRAFAC class translation factor GTPase superfamily. Classic translation factor GTPase family. EF-G/EF-2 subfamily.

The protein resides in the cytoplasm. In terms of biological role, catalyzes the GTP-dependent ribosomal translocation step during translation elongation. During this step, the ribosome changes from the pre-translocational (PRE) to the post-translocational (POST) state as the newly formed A-site-bound peptidyl-tRNA and P-site-bound deacylated tRNA move to the P and E sites, respectively. Catalyzes the coordinated movement of the two tRNA molecules, the mRNA and conformational changes in the ribosome. This is Elongation factor G from Clostridium botulinum (strain 657 / Type Ba4).